The sequence spans 136 residues: Large ribosomal subunit protein eL27A (136 aa).

Belongs to the eukaryotic ribosomal protein eL27 family. In terms of assembly, component of the large ribosomal subunit (LSU). Mature yeast ribosomes consist of a small (40S) and a large (60S) subunit. The 40S small subunit contains 1 molecule of ribosomal RNA (18S rRNA) and at least 33 different proteins. The large 60S subunit contains 3 rRNA molecules (25S, 5.8S and 5S rRNA) and at least 46 different proteins.

It is found in the cytoplasm. It localises to the nucleus. Its function is as follows. Component of the ribosome, a large ribonucleoprotein complex responsible for the synthesis of proteins in the cell. The small ribosomal subunit (SSU) binds messenger RNAs (mRNAs) and translates the encoded message by selecting cognate aminoacyl-transfer RNA (tRNA) molecules. The large subunit (LSU) contains the ribosomal catalytic site termed the peptidyl transferase center (PTC), which catalyzes the formation of peptide bonds, thereby polymerizing the amino acids delivered by tRNAs into a polypeptide chain. The nascent polypeptides leave the ribosome through a tunnel in the LSU and interact with protein factors that function in enzymatic processing, targeting, and the membrane insertion of nascent chains at the exit of the ribosomal tunnel. This chain is Large ribosomal subunit protein eL27A (rpl2701), found in Schizosaccharomyces pombe (strain 972 / ATCC 24843) (Fission yeast).